Reading from the N-terminus, the 259-residue chain is Imidazole glycerol phosphate synthase subunit HisF (259 aa).

Residues Asp-11 and Asp-130 contribute to the active site.

It belongs to the HisA/HisF family. As to quaternary structure, heterodimer of HisH and HisF.

It localises to the cytoplasm. The enzyme catalyses 5-[(5-phospho-1-deoxy-D-ribulos-1-ylimino)methylamino]-1-(5-phospho-beta-D-ribosyl)imidazole-4-carboxamide + L-glutamine = D-erythro-1-(imidazol-4-yl)glycerol 3-phosphate + 5-amino-1-(5-phospho-beta-D-ribosyl)imidazole-4-carboxamide + L-glutamate + H(+). The protein operates within amino-acid biosynthesis; L-histidine biosynthesis; L-histidine from 5-phospho-alpha-D-ribose 1-diphosphate: step 5/9. Functionally, IGPS catalyzes the conversion of PRFAR and glutamine to IGP, AICAR and glutamate. The HisF subunit catalyzes the cyclization activity that produces IGP and AICAR from PRFAR using the ammonia provided by the HisH subunit. The protein is Imidazole glycerol phosphate synthase subunit HisF of Desulfosudis oleivorans (strain DSM 6200 / JCM 39069 / Hxd3) (Desulfococcus oleovorans).